The primary structure comprises 414 residues: CinA-like protein (414 aa).

The protein belongs to the CinA family.

This Acidobacterium capsulatum (strain ATCC 51196 / DSM 11244 / BCRC 80197 / JCM 7670 / NBRC 15755 / NCIMB 13165 / 161) protein is CinA-like protein.